The chain runs to 141 residues: Hemoglobin subunit alpha (141 aa).

In terms of domain architecture, Globin spans 1-141 (VLSPADKSNV…VSTVLTSKYR (141 aa)). Phosphoserine is present on S3. Residues K7 and K11 each carry the N6-succinyllysine modification. K16 is modified (N6-acetyllysine; alternate). The residue at position 16 (K16) is an N6-succinyllysine; alternate. Position 24 is a phosphotyrosine (Y24). At S35 the chain carries Phosphoserine. K40 is modified (N6-succinyllysine). Residue S49 is modified to Phosphoserine. H58 provides a ligand contact to O2. Heme b is bound at residue H87. The residue at position 102 (S102) is a Phosphoserine. Phosphothreonine is present on T108. A phosphoserine mark is found at S124 and S131. T134 and T137 each carry phosphothreonine. Phosphoserine is present on S138.

It belongs to the globin family. In terms of assembly, heterotetramer of two alpha chains and two beta chains. As to expression, red blood cells.

In terms of biological role, involved in oxygen transport from the lung to the various peripheral tissues. Hemopressin acts as an antagonist peptide of the cannabinoid receptor CNR1. Hemopressin-binding efficiently blocks cannabinoid receptor CNR1 and subsequent signaling. This Saguinus mystax (Moustached tamarin) protein is Hemoglobin subunit alpha (HBA).